The primary structure comprises 1394 residues: Kinesin-like protein KIF27 (1394 aa).

Residues 5–341 enclose the Kinesin motor domain; the sequence is PIKVAVRIRP…LKYANRARNI (337 aa). 84–91 contributes to the ATP binding site; sequence GQTGSGKT. Coiled coils occupy residues 352 to 418 and 493 to 554; these read QADR…IEQA and QVVF…ELAK. Disordered stretches follow at residues 551–583 and 642–664; these read ELAK…PHTA and FSDN…SRSH. Positions 555–565 are enriched in polar residues; it reads RSSSMPTSTKE. Basic and acidic residues predominate over residues 571-580; the sequence is PDARAPEKRP. A phosphoserine mark is found at S643, S646, S672, S675, and S704. Positions 709 to 980 form a coiled coil; the sequence is LQKLRTSELI…NKKLRSSQAL (272 aa). A Phosphoserine modification is found at S999. 3 coiled-coil regions span residues 1010-1078, 1118-1152, and 1187-1226; these read TEEK…SIQN, NKVI…HELE, and QDGE…RLKD. The span at 1267 to 1280 shows a compositional bias: basic and acidic residues; the sequence is TENTKLNGREKEVD. The tract at residues 1267 to 1340 is disordered; that stretch reads TENTKLNGRE…SQSPPPPQLQ (74 aa). Composition is skewed to polar residues over residues 1281 to 1295 and 1310 to 1320; these read NSSS…TQQI and APSSGQLQSSA. 2 positions are modified to phosphoserine: S1365 and S1387. The disordered stretch occupies residues 1375–1394; the sequence is SLGAGVRSVTADSLEEPEES.

It belongs to the TRAFAC class myosin-kinesin ATPase superfamily. Kinesin family. KIF27 subfamily. Interacts with STK36.

The protein resides in the cytoplasm. It is found in the cytoskeleton. The protein localises to the cell projection. Its subcellular location is the cilium. Functionally, plays an essential role in motile ciliogenesis. This is Kinesin-like protein KIF27 (Kif27) from Rattus norvegicus (Rat).